Reading from the N-terminus, the 108-residue chain is Ribonuclease P protein component 4 (108 aa).

Residues C67, C70, C93, and C96 each contribute to the Zn(2+) site.

The protein belongs to the eukaryotic/archaeal RNase P protein component 4 family. In terms of assembly, consists of a catalytic RNA component and at least 4-5 protein subunits. Requires Zn(2+) as cofactor.

The protein localises to the cytoplasm. It carries out the reaction Endonucleolytic cleavage of RNA, removing 5'-extranucleotides from tRNA precursor.. Part of ribonuclease P, a protein complex that generates mature tRNA molecules by cleaving their 5'-ends. The sequence is that of Ribonuclease P protein component 4 from Methanococcoides burtonii (strain DSM 6242 / NBRC 107633 / OCM 468 / ACE-M).